The following is a 143-amino-acid chain: Endoribonuclease YbeY (143 aa).

Zn(2+) contacts are provided by histidine 109, histidine 113, and aspartate 119.

This sequence belongs to the endoribonuclease YbeY family. Zn(2+) is required as a cofactor.

It is found in the cytoplasm. Single strand-specific metallo-endoribonuclease involved in late-stage 70S ribosome quality control and in maturation of the 3' terminus of the 16S rRNA. This chain is Endoribonuclease YbeY, found in Christiangramia forsetii (strain DSM 17595 / CGMCC 1.15422 / KT0803) (Gramella forsetii).